The sequence spans 238 residues: Endonuclease V (238 aa).

Mg(2+) contacts are provided by Asp-46 and Asp-116.

This sequence belongs to the endonuclease V family. The cofactor is Mg(2+).

The protein resides in the cytoplasm. The catalysed reaction is Endonucleolytic cleavage at apurinic or apyrimidinic sites to products with a 5'-phosphate.. Functionally, DNA repair enzyme involved in the repair of deaminated bases. Selectively cleaves double-stranded DNA at the second phosphodiester bond 3' to a deoxyinosine leaving behind the intact lesion on the nicked DNA. The polypeptide is Endonuclease V (Bacillus velezensis (strain DSM 23117 / BGSC 10A6 / LMG 26770 / FZB42) (Bacillus amyloliquefaciens subsp. plantarum)).